The primary structure comprises 148 residues: MSIVLKIKRTEDAKDLPLPAYMSEGAAGMDLYANVKGEVTINPGEVELIPTGIQIELPPNYEAQIRPRSGLALNYGITLLNTPGTVDSDYRGEIKLIVINLGKQPVTIKRGQRIAQMVINQVVRPKIIEVEELSETERMDRGFGHTGV.

Residues 68–70 (RSG), N81, 85–87 (TVD), and K95 each bind substrate.

The protein belongs to the dUTPase family. It depends on Mg(2+) as a cofactor.

It catalyses the reaction dUTP + H2O = dUMP + diphosphate + H(+). It functions in the pathway pyrimidine metabolism; dUMP biosynthesis; dUMP from dCTP (dUTP route): step 2/2. This enzyme is involved in nucleotide metabolism: it produces dUMP, the immediate precursor of thymidine nucleotides and it decreases the intracellular concentration of dUTP so that uracil cannot be incorporated into DNA. The chain is Deoxyuridine 5'-triphosphate nucleotidohydrolase from Caldanaerobacter subterraneus subsp. tengcongensis (strain DSM 15242 / JCM 11007 / NBRC 100824 / MB4) (Thermoanaerobacter tengcongensis).